A 311-amino-acid polypeptide reads, in one-letter code: uncharacterized protein (311 aa).

The span at 1–12 (MPATDTNSTHTT) shows a compositional bias: polar residues. Disordered stretches follow at residues 1-44 (MPAT…DEEH) and 205-268 (ERPS…ATVH). The span at 35–44 (TSDKHADEEH) shows a compositional bias: basic and acidic residues.

This sequence belongs to the HHV-5 HKLF1 family.

This is an uncharacterized protein from Human cytomegalovirus (strain AD169) (HHV-5).